Consider the following 220-residue polypeptide: Homeobox-leucine zipper protein ATHB-21 (220 aa).

Positions 26–48 (VPQQGGEAKPTRRRKRKSKSVVV) are disordered. Residues 58–117 (GWFRKRKLSDEQVRMLEISFEDDHKLESERKDRLASELGLDPRQVAVWFQNRRARWKNKR) constitute a DNA-binding region (homeobox). Residues 118–146 (VEDEYTKLKNAYETTVVEKCRLDSEVIHL) form a leucine-zipper region.

This sequence belongs to the HD-ZIP homeobox family. Class I subfamily. Widely expressed.

The protein resides in the nucleus. In terms of biological role, probable transcription factor. The protein is Homeobox-leucine zipper protein ATHB-21 (ATHB-21) of Arabidopsis thaliana (Mouse-ear cress).